The sequence spans 396 residues: Protein nipi-4 (396 aa).

The Extracellular portion of the chain corresponds to 1–20 (MELDHTPPPSVLNDNCSASY). The N-linked (GlcNAc...) asparagine glycan is linked to asparagine 15. A helical transmembrane segment spans residues 21 to 41 (MTPYATVIAMSGLYLLAIFYF). Topologically, residues 42–396 (CKKSKKMCQP…EHHCQSVIHY (355 aa)) are cytoplasmic. Positions 81 to 368 (EVDDFQIGQT…SRLSELHHIV (288 aa)) constitute a Protein kinase domain. Residues 87-95 (IGQTADGFI) and lysine 111 each bind ATP.

It belongs to the protein kinase superfamily. Tyr protein kinase family. As to expression, expressed in the epidermis of larvae and adults and in vulval and rectal cells.

The protein resides in the membrane. Pseudokinase which plays a role in resistance to fungal infection by promoting expression of antimicrobial peptides (nlp-29, nlp-31, nlp-34, cnc-1, cnc-2 and cnc-4) in the epidermis. In addition, up-regulates nlp-29 expression upon physical wounding and in response to phorbol ester PMA treatment. The protein is Protein nipi-4 of Caenorhabditis elegans.